The following is a 405-amino-acid chain: Aspartokinase (405 aa).

An ATP-binding site is contributed by 7–10; that stretch reads KYGG. 25–30 is a binding site for substrate; the sequence is RIAHYR. Ser41 provides a ligand contact to ATP. Substrate is bound by residues 47–49, Glu74, 125–126, 150–153, and Ser153; these read TDE, LE, and RGGS. ATP contacts are provided by residues 173–174, 179–184, and Arg209; these read TD and YTTDPH. ACT domains lie at 263-342 and 344-405; these read IGLI…IAKV and IVGV…LDKA. Substrate contacts are provided by residues Asp270, 288-290, Gln294, 355-356, 369-370, and 376-377; these read AVD, VP, NI, and SE.

This sequence belongs to the aspartokinase family. As to quaternary structure, tetramer consisting of 2 isoforms Alpha (catalytic and regulation) and of a homodimer of 2 isoforms Beta (regulation).

It carries out the reaction L-aspartate + ATP = 4-phospho-L-aspartate + ADP. The protein operates within amino-acid biosynthesis; L-lysine biosynthesis via DAP pathway; (S)-tetrahydrodipicolinate from L-aspartate: step 1/4. Its pathway is amino-acid biosynthesis; L-methionine biosynthesis via de novo pathway; L-homoserine from L-aspartate: step 1/3. It functions in the pathway amino-acid biosynthesis; L-threonine biosynthesis; L-threonine from L-aspartate: step 1/5. Functionally, catalyzes the phosphorylation of the beta-carboxyl group of aspartic acid with ATP to yield 4-phospho-L-aspartate, which is involved in the branched biosynthetic pathway leading to the biosynthesis of amino acids lysine, threonine, isoleucine and methionine. This is Aspartokinase (ask) from Thermus thermophilus (strain ATCC BAA-163 / DSM 7039 / HB27).